The following is a 350-amino-acid chain: Type II restriction enzyme NgoBI (350 aa).

It carries out the reaction Endonucleolytic cleavage of DNA to give specific double-stranded fragments with terminal 5'-phosphates.. A P subtype restriction enzyme that recognizes the double-stranded sequence 5'-RGCGCY-3'; the cleavage site is unknown. The sequence is that of Type II restriction enzyme NgoBI (ngoBIR) from Neisseria gonorrhoeae.